Reading from the N-terminus, the 122-residue chain is MYAFFTIFIGGGLGAVSRHYLSVYLMRMTAINAPWAILLINLLGCLGIGFFSAYLSRLTHAQLWQWFLLTGFLGGFTTYSTFTLNLIQLGEIHLASAFLNLFLHLGGGILCCFVGFWLARAV.

Transmembrane regions (helical) follow at residues 1 to 21 (MYAF…RHYL), 35 to 55 (WAIL…SAYL), 67 to 87 (FLLT…LNLI), and 98 to 118 (FLNL…GFWL). Na(+) is bound by residues Gly74 and Thr77.

The protein belongs to the fluoride channel Fluc/FEX (TC 1.A.43) family.

The protein resides in the cell inner membrane. It carries out the reaction fluoride(in) = fluoride(out). With respect to regulation, na(+) is not transported, but it plays an essential structural role and its presence is essential for fluoride channel function. In terms of biological role, fluoride-specific ion channel. Important for reducing fluoride concentration in the cell, thus reducing its toxicity. In Dichelobacter nodosus (strain VCS1703A), this protein is Fluoride-specific ion channel FluC.